We begin with the raw amino-acid sequence, 130 residues long: ESAT-6 secretion system extracellular protein C (130 aa).

This sequence belongs to the EsxC family.

The protein localises to the secreted. In Staphylococcus aureus (strain MSSA476), this protein is ESAT-6 secretion system extracellular protein C.